Reading from the N-terminus, the 285-residue chain is Eukaryotic translation initiation factor 3 subunit J (285 aa).

2 disordered regions span residues Met1–Glu86 and Gln232–Met285. Acidic residues predominate over residues Trp22 to Glu41. The stretch at Asp36 to Phe81 forms a coiled coil. Positions Glu42–Glu86 are enriched in basic and acidic residues. The span at Asp269–Met285 shows a compositional bias: acidic residues.

This sequence belongs to the eIF-3 subunit J family. Component of the eukaryotic translation initiation factor 3 (eIF-3) complex.

The protein localises to the cytoplasm. Component of the eukaryotic translation initiation factor 3 (eIF-3) complex, which is involved in protein synthesis of a specialized repertoire of mRNAs and, together with other initiation factors, stimulates binding of mRNA and methionyl-tRNAi to the 40S ribosome. The eIF-3 complex specifically targets and initiates translation of a subset of mRNAs involved in cell proliferation. In Candida albicans (strain SC5314 / ATCC MYA-2876) (Yeast), this protein is Eukaryotic translation initiation factor 3 subunit J.